The chain runs to 3142 residues: Huntingtin (3142 aa).

A sufficient for interaction with TPR region spans residues 3 to 13 (TLEKLMKAFES). K9 is modified (N6-acetyllysine). The interval 14-85 (LKSFQQQQQQ…PGPAVAEEPL (72 aa)) is disordered. The segment covering 18-37 (QQQQQQQQQQQQQQQQQQQQ) has biased composition (low complexity). The segment covering 38-78 (QPPPPPPPPPPPQLPQPPPQAQPLLPQPQPPPPPPPPPPGP) has biased composition (pro residues). N6-acetyllysine occurs at positions 176 and 234. HEAT repeat units lie at residues 204 to 241 (PYLV…SFGN), 246 to 283 (NEIK…HSRR), and 316 to 360 (LTLR…VYEL). Position 343 is an N6-acetyllysine (K343). Phosphoserine is present on residues S411, S417, S419, and S432. Residue K442 is modified to N6-acetyllysine. The segment at 447-469 (EEEALEDDSESRSDVSSSALTAS) is disordered. Positions 491–502 (GHDIITEQPRSQ) are interaction with ZDHHC17. Positions 517–583 (LTSSATDGDE…TPSDSSEIVL (67 aa)) are disordered. Positions 531 to 545 (SHSSSQVSAVPSDPA) are enriched in low complexity. Polar residues predominate over residues 550–579 (DGTQASSPISDSSQTTTEGPDSAVTPSDSS). A lipid anchor (N-myristoyl glycine) is attached at G551. 2 positions are modified to phosphoserine: S640 and S643. HEAT repeat units follow at residues 802–839 (FSLA…SLCS) and 902–940 (KLQE…KLFY). The tract at residues 1176 to 1225 (PSLSPIRRKGKEKEPGEQASVPLSPKKGSEASAASRQSDTSGPVTTSKSS) is disordered. 2 positions are modified to phosphoserine; by CDK5: S1179 and S1199. Positions 1207-1225 (SAASRQSDTSGPVTTSKSS) are enriched in polar residues. Phosphoserine occurs at positions 1870 and 1874. Positions 2330–2351 (ERRTNTPKAISEEEEEVDPNTQ) are disordered. A Nuclear export signal motif is present at residues 2395–2404 (IIISLARLPL). Positions 2633–2662 (EEEWDEEEEEEADAPAPSSPPTSPVNSRKH) are disordered. The segment covering 2634–2645 (EEWDEEEEEEAD) has biased composition (acidic residues).

Belongs to the huntingtin family. As to quaternary structure, interacts with PFN1. Interacts through its N-terminus with PRPF40A. Interacts with PQBP1. Interacts with SETD2. Interacts with SH3GLB1. Interacts with SYVN. Interacts with TPR; the interaction is inhibited by forms of Huntingtin with expanded polyglutamine stretch. Interacts with ZDHHC13 (via ANK repeats). Interacts with ZDHHC17 (via ANK repeats). Interacts with F8A1/F8A2/F8A3. Found in a complex with F8A1/F8A2/F8A3, HTT and RAB5A; mediates the recruitment of HTT by RAB5A. In terms of processing, cleaved by caspases downstream of the polyglutamine stretch. The resulting N-terminal fragments are cytotoxic and provokes apoptosis. Post-translationally, forms with expanded polyglutamine expansion are specifically ubiquitinated by SYVN1, which promotes their proteasomal degradation. Phosphorylation at Ser-1179 and Ser-1199 by CDK5 in response to DNA damage in nuclei of neurons protects neurons against polyglutamine expansion as well as DNA damage mediated toxicity. In terms of processing, myristoylated at Gly-551, following proteolytic cleavage at Asp-550. Expressed in the brain cortex (at protein level). Widely expressed with the highest level of expression in the brain (nerve fibers, varicosities, and nerve endings). In the brain, the regions where it can be mainly found are the cerebellar cortex, the neocortex, the striatum, and the hippocampal formation.

Its subcellular location is the cytoplasm. It is found in the nucleus. It localises to the early endosome. The protein resides in the cytoplasmic vesicle. The protein localises to the autophagosome. Functionally, may play a role in microtubule-mediated transport or vesicle function. Its function is as follows. Promotes the formation of autophagic vesicles. The protein is Huntingtin (HTT) of Homo sapiens (Human).